Here is a 432-residue protein sequence, read N- to C-terminus: KLIDELEEYKKRYDEALKAHQADREVIDDLLVKLSNLEAEINLLRRRVSNLEEEVSRIKKDNLYFVNELNKARANLDQETLNRIDFQNQVQTLLEEIDFMRRVHDQEISELQAMAARDTTSENREYFKNELSSAIRDIRAEYDQICNMNRTDMESWYKLKVQEIQTQSTRQNLEQGYAKEEVKRLRVQLSDLRGKLADLEGRNSLLEKQMQELNYQLEDDQRSYEAALNDRDAQIRKMREECQALMMELQMLLDTKQTLDAEIAIYRKMLEGEENRAGLRQLVEQVVKTHGLSEIGETESIRVLKGETASRTSFQRSAKGNVSIQDASSDGKFILLENTHRSKEEPIGEWRLKRKIDGKREIVYTFPRDFILKPGKTVKIWARGQGVYSPPDQLVFDAEDSFGVGSNVQTILFNKEGEERASHIQRSSHTIS.

Positions 1–111 (KLIDELEEYK…RVHDQEISEL (111 aa)) are coil 1B. Residues 1–277 (KLIDELEEYK…KMLEGEENRA (277 aa)) enclose the IF rod domain. The linker 12 stretch occupies residues 112–128 (QAMAARDTTSENREYFK). Positions 129-277 (NELSSAIRDI…KMLEGEENRA (149 aa)) are coil 2. The interval 278-432 (GLRQLVEQVV…HIQRSSHTIS (155 aa)) is tail. The region spanning 310 to 427 (SRTSFQRSAK…EERASHIQRS (118 aa)) is the LTD domain.

This sequence belongs to the intermediate filament family.

This is Muscle cell intermediate filament protein OV71 (OV71) from Onchocerca volvulus.